Consider the following 425-residue polypeptide: Protein let-756 (425 aa).

Disordered stretches follow at residues 277-298 (LEEK…LRKE) and 314-425 (EEEL…QRYP). Over residues 281–291 (KRRREKKKRRR) the composition is skewed to basic residues. The segment covering 329–340 (ASTQTRYNRPQN) has biased composition (polar residues). Over residues 378–389 (HNSHHHHHHHPR) the composition is skewed to basic residues. A compositionally biased stretch (polar residues) spans 395–425 (DPQQRHQSQQHYLAQTVSNPNRQNVNYQRYP).

Belongs to the heparin-binding growth factors family. Interacts with pal-1. As to expression, expressed in pharynx, CAN neuron and body wall muscles.

It is found in the nucleus. The protein resides in the membrane. In terms of biological role, required for larval development. Probably by binding receptor egl-15, negatively regulates membrane protrusion from body wall muscles during larval development. The polypeptide is Protein let-756 (let-756) (Caenorhabditis elegans).